Here is a 726-residue protein sequence, read N- to C-terminus: ATP-dependent permease MDL1, mitochondrial (726 aa).

The N-terminal 112 residues, 1–112 (MDPIRFGLSR…LAFLKLCVRH (112 aa)), are a transit peptide targeting the mitochondrion. N-linked (GlcNAc...) asparagine glycosylation is found at N66, N113, and N132. Helical transmembrane passes span 158–178 (FFIA…IPYI), 196–216 (IMGI…FLGS), 306–326 (GYMS…GEYV), 386–406 (GIFF…ILAL), and 423–443 (SFLL…GCFT). The region spanning 158–447 (FFIAGSLLLV…LSGCFTDIMK (290 aa)) is the ABC transmembrane type-1 domain. The ABC transporter domain occupies 482-719 (LSFRNVGFAY…GTNFYKLMRW (238 aa)). N-linked (GlcNAc...) asparagine glycosylation occurs at N502. Residue 517 to 524 (APSGGGKS) participates in ATP binding. N-linked (GlcNAc...) asparagine glycans are attached at residues N584, N598, and N668.

This sequence belongs to the ABC transporter superfamily. ABCB family. Mitochondrial peptide exporter (TC 3.A.1.212) subfamily.

The protein resides in the mitochondrion inner membrane. Its function is as follows. Mediates export of peptides generated upon proteolysis of mitochondrial inner membrane proteins. The protein is ATP-dependent permease MDL1, mitochondrial (mdl1) of Schizosaccharomyces pombe (strain 972 / ATCC 24843) (Fission yeast).